We begin with the raw amino-acid sequence, 643 residues long: Beta-1,3-galactosyltransferase GALT1 (643 aa).

At 1–6 (MKRFYG) the chain is on the cytoplasmic side. The helical; Signal-anchor for type II membrane protein transmembrane segment at 7 to 23 (GLLVVSMCMFLTVYRYV) threads the bilayer. The Lumenal portion of the chain corresponds to 24–643 (DLNTPVEKPY…TKRSLCCREW (620 aa)). Residues Asn-45, Asn-87, Asn-144, Asn-162, Asn-277, Asn-287, and Asn-508 are each glycosylated (N-linked (GlcNAc...) asparagine). The 194-residue stretch at 171 to 364 (LKLQIPCGLT…DFRLISILAS (194 aa)) folds into the Galectin domain.

The protein belongs to the glycosyltransferase 31 family. As to quaternary structure, interacts with GMII. Requires Mn(2+) as cofactor. In terms of tissue distribution, expressed in stems and siliques.

It is found in the golgi apparatus membrane. Its pathway is protein modification; protein glycosylation. Functionally, beta-1,3-galactosyltransferase that transfers galactose from UDP-galactose to substrates with a terminal beta-N-acetylglucosamine (beta-GlcNAc) residue. Involved in the biosynthesis of N-glycans containing Lewis a structures (with the combination of FUT13). The protein is Beta-1,3-galactosyltransferase GALT1 of Arabidopsis thaliana (Mouse-ear cress).